The sequence spans 185 residues: Stathmin-4 (185 aa).

The 138-residue stretch at 48–185 folds into the SLD domain; it reads SDMEVIELNK…EVRKNKEATR (138 aa). The stretch at 90-185 forms a coiled coil; the sequence is SLEEIQKKLE…EVRKNKEATR (96 aa). The segment at 165–185 is disordered; it reads ERLQEKDKHAEEVRKNKEATR. A compositionally biased stretch (basic and acidic residues) spans 166–185; that stretch reads RLQEKDKHAEEVRKNKEATR.

The protein belongs to the stathmin family. As to expression, nervous tissue.

This is Stathmin-4 (stmn4) from Xenopus laevis (African clawed frog).